The sequence spans 213 residues: Thiopurine S-methyltransferase (213 aa).

Residues Trp-10, Met-45, Glu-66, and Arg-120 each coordinate S-adenosyl-L-methionine.

This sequence belongs to the class I-like SAM-binding methyltransferase superfamily. TPMT family.

The protein resides in the cytoplasm. It carries out the reaction S-adenosyl-L-methionine + a thiopurine = S-adenosyl-L-homocysteine + a thiopurine S-methylether.. This chain is Thiopurine S-methyltransferase, found in Photobacterium profundum (strain SS9).